We begin with the raw amino-acid sequence, 94 residues long: Large ribosomal subunit protein eL42 (94 aa).

4 residues coordinate Zn(2+): Cys-11, Cys-14, Cys-71, and Cys-74. The C4-type zinc-finger motif lies at 11 to 74 (CPFCKRHTIH…LDLRFRCTVC (64 aa)).

It belongs to the eukaryotic ribosomal protein eL42 family. As to quaternary structure, part of the 50S ribosomal subunit. Zn(2+) is required as a cofactor.

Binds to the 23S rRNA. This Thermococcus kodakarensis (strain ATCC BAA-918 / JCM 12380 / KOD1) (Pyrococcus kodakaraensis (strain KOD1)) protein is Large ribosomal subunit protein eL42.